A 213-amino-acid chain; its full sequence is Flagellin A1 (213 aa).

Residues 1-10 (MFENINEDRG) constitute a propeptide that is removed on maturation. N70, N115, and N172 each carry an N-linked (GlcNAc...) asparagine glycan.

This sequence belongs to the archaeal flagellin family. Glycosylated by a pentasaccharide similar to the S-layer glycoprotein, probably comprising a hexose, 2 hexuronic acids, a methyl ester of a hexuronic acid and mannose. Glycosylation is required for biosynthesis of stable flagella.

It localises to the archaeal flagellum. In terms of biological role, major flagellin required for motility. Not involved in PibD-dependent surface adhesion. Much more abundant in cells compared to FlgA2. This is Flagellin A1 (flgA1) from Haloferax volcanii (strain ATCC 29605 / DSM 3757 / JCM 8879 / NBRC 14742 / NCIMB 2012 / VKM B-1768 / DS2) (Halobacterium volcanii).